A 790-amino-acid polypeptide reads, in one-letter code: Phenylalanine--tRNA ligase beta subunit (790 aa).

A tRNA-binding domain is found at 39-147 (AKPFSGIVVG…ADAPVGVDVR (109 aa)). Positions 400–476 (PAKALVNLRH…RLYGYNKLPV (77 aa)) constitute a B5 domain. Mg(2+) contacts are provided by Asp454, Asp460, Glu463, and Glu464. Positions 696-789 (SRFPEIRRDL…LGNRFGASLR (94 aa)) constitute an FDX-ACB domain.

The protein belongs to the phenylalanyl-tRNA synthetase beta subunit family. Type 1 subfamily. As to quaternary structure, tetramer of two alpha and two beta subunits. Mg(2+) is required as a cofactor.

Its subcellular location is the cytoplasm. It carries out the reaction tRNA(Phe) + L-phenylalanine + ATP = L-phenylalanyl-tRNA(Phe) + AMP + diphosphate + H(+). The chain is Phenylalanine--tRNA ligase beta subunit from Hahella chejuensis (strain KCTC 2396).